Here is a 486-residue protein sequence, read N- to C-terminus: Outer dynein arm-docking complex subunit 4 (486 aa).

TPR repeat units follow at residues 14-47 (FTTY…QPDD), 49-81 (NCLV…NKNY), and 82-115 (FKGL…RPEL). Residues 153-180 (GVHPQNLNPSNKKESKKHSKKTDKGEKT) are disordered. TPR repeat units lie at residues 314 to 347 (GNLH…AKKC), 354 to 387 (SRAL…ACGG), 391 to 424 (AWLF…ADDI), and 431 to 464 (LNAS…AKLL).

Component of the outer dynein arm-docking complex along with ODAD1, ODAD2 and ODAD3.

It is found in the cytoplasm. The protein resides in the cytoskeleton. Its subcellular location is the cilium axoneme. Its function is as follows. Component of the outer dynein arm-docking complex (ODA-DC) that mediates outer dynein arms (ODA) binding onto the doublet microtubule. Plays an essential role for the assembly of ODA-DC and in the docking of ODA in ciliary axoneme. In Danio rerio (Zebrafish), this protein is Outer dynein arm-docking complex subunit 4 (odad4).